We begin with the raw amino-acid sequence, 896 residues long: Rho GTPase-activating protein gacM (896 aa).

The disordered stretch occupies residues 1–97 (MSSFIGWKKN…SSNDTIGKSS (97 aa)). Residues 10–26 (NSNSGGTPGASPTSSSP) show a composition bias toward low complexity. The segment covering 27-38 (LNSTISNANSVS) has biased composition (polar residues). 2 stretches are compositionally biased toward low complexity: residues 45 to 57 (SISNTSSSSLSSS) and 65 to 97 (NSNNNSPPLSSSSSSTSTYSTPNSSNDTIGKSS). Residues 139-330 (QPINPNTEFG…LWIEEFDMIS (192 aa)) enclose the Rho-GAP domain. 4 stretches are compositionally biased toward low complexity: residues 375 to 391 (IQQQLQQQQQQQQQSHP), 400 to 427 (SSLSSSSLQVNLQTSPKSPQSPKLLLPT), 448 to 460 (PTPTTTPTLTPQT), and 473 to 506 (NNNSNNNNNNNNNNSNNNNNNNNNNNNNNNNNNN). Disordered regions lie at residues 375-514 (IQQQ…GSPL) and 701-770 (LPTG…ENQI). A compositionally biased stretch (polar residues) spans 702–711 (PTGSSWSDFE). 2 stretches are compositionally biased toward low complexity: residues 712–743 (NNSSNNNININNNINNSSSNNNNNNSSPNSSP) and 751–761 (SNGLNSSSNSN).

The protein localises to the cytoplasm. Rho GTPase-activating protein involved in the signal transduction pathway. The sequence is that of Rho GTPase-activating protein gacM (gacM) from Dictyostelium discoideum (Social amoeba).